Consider the following 911-residue polypeptide: Band 3 anion transport protein (911 aa).

At M1 the chain carries N-acetylmethionine. Residues 1–26 (MEELQDDYEDMMEENLEQEEYEDPDI) show a composition bias toward acidic residues. The interval 1–40 (MEELQDDYEDMMEENLEQEEYEDPDIPESQMEEPAAHDTE) is disordered. Topologically, residues 1 to 403 (MEELQDDYED…LSDITDAFSP (403 aa)) are cytoplasmic. Y8, Y21, and Y46 each carry phosphotyrosine. Residues 13–31 (EENLEQEEYEDPDIPESQM) are (Microbial infection) Interaction with P.falciparum (isolate K1) FBPA. Positions 55–290 (HKVYVELQEL…LGRAAATLMS (236 aa)) are globular. Positions 176-185 (AVLTRSGDPS) are interaction with ANK1. Phosphoserine is present on residues S185 and S350. A dimerization arm region spans residues 304-357 (RGELLHSLEGFLDCSLVLPPTDAPSEQALLSLVPVQRELLRRRYQSSPAKPDSS). A Phosphotyrosine modification is found at Y359. A helical membrane pass occupies residues 404-427 (QVLAAVIFIYFAALSPAITFGGLL). At 428–435 (GEKTRNQM) the chain is on the extracellular side. The chain crosses the membrane as a helical span at residues 436-456 (GVSELLISTAVQGILFALLGA). The Cytoplasmic portion of the chain corresponds to 457-459 (QPL). A discontinuously helical membrane pass occupies residues 460-476 (LVVGFSGPLLVFEEAFF). Residues 477–485 (SFCETNGLE) are Extracellular-facing. The helical transmembrane segment at 486 to 506 (YIVGRVWIGFWLILLVVLVVA) threads the bilayer. The Cytoplasmic segment spans residues 507–518 (FEGSFLVRFISR). The chain crosses the membrane as a helical span at residues 519–541 (YTQEIFSFLISLIFIYETFSKLI). At 542–570 (KIFQDHPLQKTYNYNVLMVPKPQGPLPNT) the chain is on the extracellular side. An involved in anion transport region spans residues 559 to 630 (MVPKPQGPLP…DFFIQDTYTQ (72 aa)). Residues 571-591 (ALLSLVLMAGTFFFAMMLRKF) traverse the membrane as a helical segment. At 592 to 602 (KNSSYFPGKLR) the chain is on the cytoplasmic side. Residues 603–623 (RVIGDFGVPISILIMVLVDFF) traverse the membrane as a helical segment. Residues 624–663 (IQDTYTQKLSVPDGFKVSNSSARGWVIHPLGLRSEFPIWM) lie on the Extracellular side of the membrane. N-linked (GlcNAc...) (complex) asparagine glycosylation is present at N642. The helical transmembrane segment at 664 to 684 (MFASALPALLVFILIFLESQI) threads the bilayer. Residues 685–700 (TTLIVSKPERKMVKGS) are Cytoplasmic-facing. A helical transmembrane segment spans residues 701–719 (GFHLDLLLVVGMGGVAALF). The chain crosses the membrane as a discontinuously helical span at residues 720–737 (GMPWLSATTVRSVTHANA). Positions 720–761 (GMPWLSATTVRSVTHANALTVMGKASTPGAAAQIQEVKEQRI) are (Microbial infection) 5ABC region; interaction with P.falciparum (isolate 3D7) MSP9. At 738–760 (LTVMGKASTPGAAAQIQEVKEQR) the chain is on the cytoplasmic side. Transmembrane regions (helical) follow at residues 761–781 (ISGLLVAVLVGLSILMEPILS) and 782–800 (RIPLAVLFGIFLYMGVTSL). Residues 801-838 (SGIQLFDRILLLFKPPKYHPDVPYVKRVKTWRMHLFTG) are Cytoplasmic-facing. An intramembrane region (discontinuously helical) is located at residues 839–869 (IQIICLAVLWVVKSTPASLALPFVLILTVPL). A lipid anchor (S-palmitoyl cysteine) is attached at C843. Residues 870–911 (RRVLLPLIFRNVELQCLDADDAKATFDEEEGRDEYDEVAMPV) lie on the Cytoplasmic side of the membrane. The residue at position 904 (Y904) is a Phosphotyrosine.

This sequence belongs to the anion exchanger (TC 2.A.31) family. As to quaternary structure, a dimer in solution, but in its membrane environment, it exists primarily as a mixture of dimers and tetramers and spans the membrane asymmetrically. Component of the ankyrin-1 complex in the erythrocyte, composed of ANK1, RHCE, RHAG, SLC4A1, EPB42, GYPA, GYPB and AQP1. Interacts with STOM; this interaction positively regulates SLC4A1 activity. Interacts with GYPA; a GYPA monomer is bound at each end of the SLC4A1 dimer forming a heterotetramer. Three SLC4A1 dimers (Band 3-I, Band 3-II and Band 3-III) participates in the ankyrin-1 complex. Interacts (via the cytoplasmic domain) with EPB42; this interaction is mediated by the SLC4A1 Band 3-I dimer. Interacts (via the cytoplasmic domain) directly with ANK1; this interaction is mediated by the SLC4A1 Band 3-II and Band 3-III dimers. In terms of assembly, interacts with TMEM139. (Microbial infection) Interacts (via N-terminus) with P.falciparum (isolate K1) aldolase FBPA; the interaction inhibits FBPA catalytic activity. As to quaternary structure, (Microbial infection) Interacts (via the 5ABC region) with P.falciparum (isolate 3D7) MSP9/ABRA (via N-terminus). In terms of assembly, (Microbial infection) Interacts (via the 5ABC region) with P.falciparum (isolate 3D7) MSP1 p42 subunit. In terms of processing, phosphorylated on Tyr-8 and Tyr-21 most likely by SYK. PP1-resistant phosphorylation that precedes Tyr-359 and Tyr-904 phosphorylation. Phosphorylated on Tyr-359 and Tyr-904 most likely by LYN. PP1-inhibited phosphorylation that follows Tyr-8 and Tyr-21 phosphorylation. Post-translationally, N-glycosylated. Detected in erythrocytes (at protein level). In terms of tissue distribution, expressed in kidney (at protein level).

The protein resides in the cell membrane. Its subcellular location is the basolateral cell membrane. The enzyme catalyses hydrogencarbonate(in) + chloride(out) = hydrogencarbonate(out) + chloride(in). Its activity is regulated as follows. Phenyl isothiocyanate inhibits anion transport in vitro. Functionally, functions both as a transporter that mediates electroneutral anion exchange across the cell membrane and as a structural protein. Component of the ankyrin-1 complex of the erythrocyte membrane; required for normal flexibility and stability of the erythrocyte membrane and for normal erythrocyte shape via the interactions of its cytoplasmic domain with cytoskeletal proteins, glycolytic enzymes, and hemoglobin. Functions as a transporter that mediates the 1:1 exchange of inorganic anions across the erythrocyte membrane. Mediates chloride-bicarbonate exchange in the kidney, and is required for normal acidification of the urine. (Microbial infection) Acts as a receptor for P.falciparum (isolate 3D7) MSP9 and thus, facilitates merozoite invasion of erythrocytes. Acts as a receptor for P.falciparum (isolate 3D7) MSP1 and thus, facilitates merozoite invasion of erythrocytes. The sequence is that of Band 3 anion transport protein from Homo sapiens (Human).